The primary structure comprises 244 residues: Uridylate kinase (244 aa).

Residue 18–21 (KISG) coordinates ATP. Residues 26–31 (GDQGYG) are involved in allosteric activation by GTP. G60 lines the UMP pocket. ATP-binding residues include G61 and R65. UMP contacts are provided by residues D80 and 141–148 (TGNPYFTT). Positions 168, 174, and 177 each coordinate ATP.

Belongs to the UMP kinase family. In terms of assembly, homohexamer.

Its subcellular location is the cytoplasm. It catalyses the reaction UMP + ATP = UDP + ADP. It functions in the pathway pyrimidine metabolism; CTP biosynthesis via de novo pathway; UDP from UMP (UMPK route): step 1/1. Its activity is regulated as follows. Allosterically activated by GTP. Inhibited by UTP. Catalyzes the reversible phosphorylation of UMP to UDP. This chain is Uridylate kinase, found in Paracoccus denitrificans (strain Pd 1222).